Reading from the N-terminus, the 433-residue chain is Serine--tRNA ligase (433 aa).

An L-serine-binding site is contributed by 235-237; it reads TSE. 266-268 serves as a coordination point for ATP; it reads RSE. Glutamate 289 lines the L-serine pocket. 353 to 356 serves as a coordination point for ATP; that stretch reads EISS. Residue serine 388 participates in L-serine binding.

This sequence belongs to the class-II aminoacyl-tRNA synthetase family. Type-1 seryl-tRNA synthetase subfamily. As to quaternary structure, homodimer. The tRNA molecule binds across the dimer.

Its subcellular location is the cytoplasm. The enzyme catalyses tRNA(Ser) + L-serine + ATP = L-seryl-tRNA(Ser) + AMP + diphosphate + H(+). It catalyses the reaction tRNA(Sec) + L-serine + ATP = L-seryl-tRNA(Sec) + AMP + diphosphate + H(+). It participates in aminoacyl-tRNA biosynthesis; selenocysteinyl-tRNA(Sec) biosynthesis; L-seryl-tRNA(Sec) from L-serine and tRNA(Sec): step 1/1. Functionally, catalyzes the attachment of serine to tRNA(Ser). Is also able to aminoacylate tRNA(Sec) with serine, to form the misacylated tRNA L-seryl-tRNA(Sec), which will be further converted into selenocysteinyl-tRNA(Sec). The polypeptide is Serine--tRNA ligase (Burkholderia cenocepacia (strain ATCC BAA-245 / DSM 16553 / LMG 16656 / NCTC 13227 / J2315 / CF5610) (Burkholderia cepacia (strain J2315))).